Consider the following 307-residue polypeptide: Quinolinate synthase (307 aa).

His-23 and Ser-40 together coordinate iminosuccinate. Cys-86 lines the [4Fe-4S] cluster pocket. Iminosuccinate is bound by residues 112-114 and Ser-129; that span reads YVN. Cys-173 provides a ligand contact to [4Fe-4S] cluster. Iminosuccinate is bound by residues 199–201 and Thr-216; that span reads HPE. Cys-265 contributes to the [4Fe-4S] cluster binding site.

It belongs to the quinolinate synthase family. Type 2 subfamily. It depends on [4Fe-4S] cluster as a cofactor.

It is found in the cytoplasm. It catalyses the reaction iminosuccinate + dihydroxyacetone phosphate = quinolinate + phosphate + 2 H2O + H(+). Its pathway is cofactor biosynthesis; NAD(+) biosynthesis; quinolinate from iminoaspartate: step 1/1. Its function is as follows. Catalyzes the condensation of iminoaspartate with dihydroxyacetone phosphate to form quinolinate. This Methanocaldococcus jannaschii (strain ATCC 43067 / DSM 2661 / JAL-1 / JCM 10045 / NBRC 100440) (Methanococcus jannaschii) protein is Quinolinate synthase.